Here is a 278-residue protein sequence, read N- to C-terminus: Probable endonuclease LCL3 (278 aa).

A helical transmembrane segment spans residues 15-37 (FSSDVVLLSLLISGSTLGAIAGY). Residues 58–263 (RWMYGKVTAV…KAKKRGLWRQ (206 aa)) form the TNase-like domain. R154 is an active-site residue. D159 serves as a coordination point for Ca(2+). Residues E162 and R202 contribute to the active site.

It belongs to the LCL3 family.

The protein resides in the mitochondrion. It is found in the membrane. The polypeptide is Probable endonuclease LCL3 (LCL3) (Vanderwaltozyma polyspora (strain ATCC 22028 / DSM 70294 / BCRC 21397 / CBS 2163 / NBRC 10782 / NRRL Y-8283 / UCD 57-17) (Kluyveromyces polysporus)).